Here is a 317-residue protein sequence, read N- to C-terminus: Apolipoprotein E (317 aa).

Positions M1 to A18 are cleaved as a signal peptide. Repeat copies occupy residues T80–S101, P102–G123, A124–G145, Q146–L167, R168–E189, R190–A211, T212–R233, and A234–A255. The tract at residues T80–A255 is 8 X 22 AA approximate tandem repeats. Position 143 is a methionine sulfoxide (M143). A Phosphoserine modification is found at S147. The segment at H158–R168 is LDL and other lipoprotein receptors binding. L162 to R165 contacts heparin. The lipid-binding and lipoprotein association stretch occupies residues A210–M290. G229–M236 serves as a coordination point for heparin. Residues Q266 to H317 form a homooligomerization region. The specificity for association with VLDL stretch occupies residues R278–M290.

This sequence belongs to the apolipoprotein A1/A4/E family. In terms of assembly, homotetramer. May interact with ABCA1; functionally associated with ABCA1 in the biogenesis of HDLs. May interact with APP/A4 amyloid-beta peptide; the interaction is extremely stable in vitro but its physiological significance is unclear. May interact with MAPT. May interact with MAP2. In the cerebrospinal fluid, interacts with secreted SORL1. Interacts with PMEL; this allows the loading of PMEL luminal fragment on ILVs to induce fibril nucleation. Post-translationally, APOE exists as multiple glycosylated and sialylated glycoforms within cells and in plasma. The extent of glycosylation and sialylation are tissue and context specific. In terms of processing, glycated in plasma VLDL. Phosphorylated by FAM20C in the extracellular medium.

It localises to the secreted. Its subcellular location is the extracellular space. It is found in the extracellular matrix. The protein localises to the extracellular vesicle. The protein resides in the endosome. It localises to the multivesicular body. Its function is as follows. APOE is an apolipoprotein, a protein associating with lipid particles, that mainly functions in lipoprotein-mediated lipid transport between organs via the plasma and interstitial fluids. APOE is a core component of plasma lipoproteins and is involved in their production, conversion and clearance. Apolipoproteins are amphipathic molecules that interact both with lipids of the lipoprotein particle core and the aqueous environment of the plasma. As such, APOE associates with chylomicrons, chylomicron remnants, very low density lipoproteins (VLDL) and intermediate density lipoproteins (IDL) but shows a preferential binding to high-density lipoproteins (HDL). It also binds a wide range of cellular receptors including the LDL receptor/LDLR, the LDL receptor-related proteins LRP1, LRP2 and LRP8 and the very low-density lipoprotein receptor/VLDLR that mediate the cellular uptake of the APOE-containing lipoprotein particles. Finally, APOE also has a heparin-binding activity and binds heparan-sulfate proteoglycans on the surface of cells, a property that supports the capture and the receptor-mediated uptake of APOE-containing lipoproteins by cells. A main function of APOE is to mediate lipoprotein clearance through the uptake of chylomicrons, VLDLs, and HDLs by hepatocytes. APOE is also involved in the biosynthesis by the liver of VLDLs as well as their uptake by peripheral tissues ensuring the delivery of triglycerides and energy storage in muscle, heart and adipose tissues. By participating in the lipoprotein-mediated distribution of lipids among tissues, APOE plays a critical role in plasma and tissues lipid homeostasis. APOE is also involved in two steps of reverse cholesterol transport, the HDLs-mediated transport of cholesterol from peripheral tissues to the liver, and thereby plays an important role in cholesterol homeostasis. First, it is functionally associated with ABCA1 in the biogenesis of HDLs in tissues. Second, it is enriched in circulating HDLs and mediates their uptake by hepatocytes. APOE also plays an important role in lipid transport in the central nervous system, regulating neuron survival and sprouting. The protein is Apolipoprotein E (APOE) of Colobus guereza (Mantled guereza).